Consider the following 592-residue polypeptide: Solute carrier family 13 member 2 (592 aa).

A run of 4 helical transmembrane segments spans residues 13–33, 53–73, 86–106, and 114–134; these read SYLI…LVPS, ALPL…MGIV, SNLL…WNLH, and LLIV…VTAF. The segment covering 165–177 has biased composition (polar residues); it reads SSNVEEGSNNPTF. Residues 165 to 185 are disordered; the sequence is SSNVEEGSNNPTFELQEPSPQ. A run of 8 helical transmembrane segments spans residues 221-241, 274-294, 324-344, 371-391, 450-470, 482-502, 511-531, and 545-565; these read MSLC…TGTA, MVIL…GFNF, PMTF…LLWF, GTVA…FPGL, PLQS…VATF, IFLP…LYVM, LAFM…FGDL, and IIGV…LFSL.

This sequence belongs to the SLC13A/DASS transporter (TC 2.A.47) family. NADC subfamily. As to expression, expressed in kidney and intestine. In kidney expressed in the proximal tubule (at protein level).

The protein localises to the apical cell membrane. The catalysed reaction is succinate(out) + 3 Na(+)(out) = succinate(in) + 3 Na(+)(in). The enzyme catalyses fumarate(out) + 3 Na(+)(out) = fumarate(in) + 3 Na(+)(in). It catalyses the reaction 2-oxoglutarate(out) + 3 Na(+)(out) = 2-oxoglutarate(in) + 3 Na(+)(in). With respect to regulation, li(+) decreases succinate transport in the presence of Na(+), by competing at one of the three cation binding sites. Low-affinity sodium-dicarboxylate cotransporter, that mediates the entry of citric acid cycle intermediates, such as succinate, citrate, fumarate and alpha-ketoglutarate (2-oxoglutarate) into the small intestine and renal proximal tubule. Transports the dicarboxylate into the cell with a probable stoichiometry of 3 Na(+) for 1 divalent dicarboxylate, rendering the process electrogenic. Citrate is transported in protonated form as a divalent anion, rather than the trivalent form which is normally found in blood. Has a critical role in renal dicarboxylate transport. The polypeptide is Solute carrier family 13 member 2 (SLC13A2) (Homo sapiens (Human)).